The primary structure comprises 349 residues: Protein-glutamate methylesterase/protein-glutamine glutaminase (349 aa).

Residues 5–122 (KVLVVDDSAF…SLDLYKVKDE (118 aa)) enclose the Response regulatory domain. Asp-56 bears the 4-aspartylphosphate mark. The CheB-type methylesterase domain maps to 156–349 (ARPQQAIVAI…AAAIVQLIGE (194 aa)). Active-site residues include Ser-168, His-195, and Asp-291.

This sequence belongs to the CheB family. Phosphorylated by CheA. Phosphorylation of the N-terminal regulatory domain activates the methylesterase activity.

Its subcellular location is the cytoplasm. It carries out the reaction [protein]-L-glutamate 5-O-methyl ester + H2O = L-glutamyl-[protein] + methanol + H(+). It catalyses the reaction L-glutaminyl-[protein] + H2O = L-glutamyl-[protein] + NH4(+). Functionally, involved in chemotaxis. Part of a chemotaxis signal transduction system that modulates chemotaxis in response to various stimuli. Catalyzes the demethylation of specific methylglutamate residues introduced into the chemoreceptors (methyl-accepting chemotaxis proteins or MCP) by CheR. Also mediates the irreversible deamidation of specific glutamine residues to glutamic acid. This is Protein-glutamate methylesterase/protein-glutamine glutaminase from Geobacillus kaustophilus (strain HTA426).